The following is a 369-amino-acid chain: Cytokine receptor common subunit gamma (369 aa).

A signal peptide spans 1-22; the sequence is MLKLLLSPRSFLVLQLLLLRAG. Over 23–263 the chain is Extracellular; the sequence is WSSKVLMSSA…ENPSLFALEA (241 aa). Cys-62 and Cys-72 are oxidised to a cystine. Asn-71, Asn-75, Asn-84, and Asn-96 each carry an N-linked (GlcNAc...) asparagine glycan. A disulfide bond links Cys-102 and Cys-115. The Fibronectin type-III domain occupies 156–254; sequence APENLTLSNL…VHWGSHTVEE (99 aa). Residues Asn-159 and Asn-164 are each glycosylated (N-linked (GlcNAc...) asparagine). The short motif at 238–242 is the WSXWS motif element; sequence WSKWS. Residues 264-284 traverse the membrane as a helical segment; sequence VLIPVGTMGLIITLIFVYCWL. At 285–369 the chain is on the cytoplasmic side; the sequence is ERMPPIPPIK…PPCYSLKPEA (85 aa). The Box 1 motif signature appears at 286–294; that stretch reads RMPPIPPIK.

This sequence belongs to the type I cytokine receptor family. Type 5 subfamily. As to quaternary structure, the gamma subunit is common to the IL2, IL4, IL7, IL15, IL21 and probably also the IL13 receptors. Interacts with SHB upon interleukin stimulation. Interacts with IL9.

The protein localises to the cell membrane. It is found in the cell surface. In terms of biological role, common subunit for the receptors for a variety of interleukins. Probably in association with IL15RA, involved in the stimulation of neutrophil phagocytosis by IL15. The protein is Cytokine receptor common subunit gamma (Il2rg) of Mus musculus (Mouse).